A 46-amino-acid chain; its full sequence is Diuretic hormone class 1 (46 aa).

The residue at position 46 (Ile-46) is an Isoleucine amide.

The protein localises to the secreted. Regulation of fluid secretion. Stimulates primary urine secretion by Malpighian tubules and causes a dose-dependent stimulation of cAMP levels in the tubules. Has a greater effect on the transport of Na(+) then K(+) ions. In vitro, has synergistic effects with the smaller diuretic hormone DH(31) which co-occurs with it. In Diploptera punctata (Pacific beetle cockroach), this protein is Diuretic hormone class 1.